Consider the following 181-residue polypeptide: Acireductone dioxygenase (181 aa).

Fe(2+)-binding residues include His97, His99, Glu103, and His141. Residues His97, His99, Glu103, and His141 each coordinate Ni(2+).

The protein belongs to the acireductone dioxygenase (ARD) family. In terms of assembly, monomer. Requires Fe(2+) as cofactor. Ni(2+) is required as a cofactor.

It catalyses the reaction 1,2-dihydroxy-5-(methylsulfanyl)pent-1-en-3-one + O2 = 3-(methylsulfanyl)propanoate + CO + formate + 2 H(+). It carries out the reaction 1,2-dihydroxy-5-(methylsulfanyl)pent-1-en-3-one + O2 = 4-methylsulfanyl-2-oxobutanoate + formate + 2 H(+). It functions in the pathway amino-acid biosynthesis; L-methionine biosynthesis via salvage pathway; L-methionine from S-methyl-5-thio-alpha-D-ribose 1-phosphate: step 5/6. Catalyzes 2 different reactions between oxygen and the acireductone 1,2-dihydroxy-3-keto-5-methylthiopentene (DHK-MTPene) depending upon the metal bound in the active site. Fe-containing acireductone dioxygenase (Fe-ARD) produces formate and 2-keto-4-methylthiobutyrate (KMTB), the alpha-ketoacid precursor of methionine in the methionine recycle pathway. Ni-containing acireductone dioxygenase (Ni-ARD) produces methylthiopropionate, carbon monoxide and formate, and does not lie on the methionine recycle pathway. The protein is Acireductone dioxygenase of Stutzerimonas stutzeri (strain A1501) (Pseudomonas stutzeri).